A 343-amino-acid chain; its full sequence is Protein RecA (343 aa).

An ATP-binding site is contributed by 66 to 73 (GPESSGKT). A disordered region spans residues 319–343 (IERQIREKHLPKRSAKADEAESAEA).

It belongs to the RecA family.

It localises to the cytoplasm. Can catalyze the hydrolysis of ATP in the presence of single-stranded DNA, the ATP-dependent uptake of single-stranded DNA by duplex DNA, and the ATP-dependent hybridization of homologous single-stranded DNAs. It interacts with LexA causing its activation and leading to its autocatalytic cleavage. The protein is Protein RecA of Thioalkalivibrio sulfidiphilus (strain HL-EbGR7).